Here is a 21-residue protein sequence, read N- to C-terminus: IIGPVLGMVGSALGGLLKKIG.

I2 carries the post-translational modification D-allo-isoleucine; in form H3. At I20 the chain carries Isoleucine amide.

Belongs to the bombinin family. In terms of tissue distribution, expressed by the skin glands.

It is found in the secreted. Its function is as follows. Has antimicrobial and hemolytic activities. This Bombina variegata (Yellow-bellied toad) protein is Bombinin-H1/H3.